A 947-amino-acid polypeptide reads, in one-letter code: Protocadherin alpha-4 (947 aa).

A signal peptide spans 1 to 29 (MEFSWGSGQESRRLLLLLLLLAAWEAGNG). 6 Cadherin domains span residues 30 to 133 (QLHY…PPVF), 134 to 242 (PATQ…APAF), 243 to 350 (DRTI…VPDL), 351 to 455 (EFKS…APAF), 456 to 565 (AQPE…APAL), and 588 to 678 (GHVV…APKA). At 30–697 (QLHYSVSEEA…GPDAALVDVN (668 aa)) the chain is on the extracellular side. Cys96 and Cys102 are oxidised to a cystine. N-linked (GlcNAc...) asparagine glycans are attached at residues Asn139, Asn257, and Asn265. Residue Asn548 is glycosylated (N-linked (GlcNAc...) asparagine). Residues 698-718 (VYLIIAICAVSSLLVLTLLLY) form a helical membrane-spanning segment. Topologically, residues 719–947 (TALRCSALPT…GNSTTDNSDQ (229 aa)) are cytoplasmic. 6 PXXP repeats span residues 734-737 (PGKP), 774-777 (PSLP), 796-799 (PRQP), 829-832 (PGGP), 870-873 (PGNP), and 888-891 (PGSP). Positions 734–891 (PGKPTLVCSS…PDKFIIPGSP (158 aa)) are 6 X 4 AA repeats of P-X-X-P. Residues 738-947 (TLVCSSAVGS…GNSTTDNSDQ (210 aa)) are required for interaction with FYN. Disordered regions lie at residues 754-805 (RRPR…DWRY), 828-853 (GPGG…EVSP), and 868-947 (YGPG…NSDQ). The segment covering 906–920 (DKSDFITFGKKEETK) has biased composition (basic and acidic residues).

As to quaternary structure, forms homodimers in trans (molecules expressed by two different cells). Forms promiscuous heterodimers in cis (at the plasma membrane of the same cell) with other protocadherins. Interacts with FYN.

It localises to the cell membrane. Functionally, calcium-dependent cell-adhesion protein involved in cells self-recognition and non-self discrimination. Thereby, it is involved in the establishment and maintenance of specific neuronal connections in the brain. The polypeptide is Protocadherin alpha-4 (Homo sapiens (Human)).